We begin with the raw amino-acid sequence, 513 residues long: ATP synthase subunit alpha (513 aa).

169–176 (GDRQTGKT) serves as a coordination point for ATP.

The protein belongs to the ATPase alpha/beta chains family. As to quaternary structure, F-type ATPases have 2 components, CF(1) - the catalytic core - and CF(0) - the membrane proton channel. CF(1) has five subunits: alpha(3), beta(3), gamma(1), delta(1), epsilon(1). CF(0) has three main subunits: a(1), b(2) and c(9-12). The alpha and beta chains form an alternating ring which encloses part of the gamma chain. CF(1) is attached to CF(0) by a central stalk formed by the gamma and epsilon chains, while a peripheral stalk is formed by the delta and b chains.

It localises to the cell inner membrane. It carries out the reaction ATP + H2O + 4 H(+)(in) = ADP + phosphate + 5 H(+)(out). In terms of biological role, produces ATP from ADP in the presence of a proton gradient across the membrane. The alpha chain is a regulatory subunit. The polypeptide is ATP synthase subunit alpha (Haemophilus influenzae (strain PittGG)).